The primary structure comprises 170 residues: Cytochrome b6-f complex subunit 4 (170 aa).

The next 3 helical transmembrane spans lie at 46–66, 105–125, and 141–161; these read LLFMFPVVILGTIGVIVGLSV, LLGIALMSAIPVGLLFVPFIE, and TVFLIGTLVTLYLGIGATLPL.

This sequence belongs to the cytochrome b family. PetD subfamily. As to quaternary structure, the 4 large subunits of the cytochrome b6-f complex are cytochrome b6, subunit IV (17 kDa polypeptide, PetD), cytochrome f and the Rieske protein, while the 4 small subunits are PetG, PetL, PetM and PetN. The complex functions as a dimer.

The protein localises to the cellular thylakoid membrane. Functionally, component of the cytochrome b6-f complex, which mediates electron transfer between photosystem II (PSII) and photosystem I (PSI), cyclic electron flow around PSI, and state transitions. This chain is Cytochrome b6-f complex subunit 4, found in Synechococcus sp. (strain JA-2-3B'a(2-13)) (Cyanobacteria bacterium Yellowstone B-Prime).